A 256-amino-acid chain; its full sequence is Matrix protein (256 aa).

The segment at 1–110 (METYVNKLHE…KLAYDVTTPC (110 aa)) is interaction with M2-1. Residues 110-183 (CEIKACSLTC…LNTLENITTT (74 aa)) are nuclear targeting and binding to host importin KPNB1. Positions 194 to 206 (IIPYSGLLLVITV) match the Nuclear export signal motif. T205 is modified (phosphothreonine; by host CK2).

It belongs to the pneumovirinae M protein family. Forms dimers. Forms higher-order oligomers. Interacts with glycoprotein G (via N-terminus). Interacts with protein M2-1; this interaction directs the matrix protein localization to cytoplasmic inclusions comprising viral proteins L, N, P, and M2-1 and mediates the matrix protein association with the nucleocapsid. Interacts with host importin KPNB1; this interaction mediates nuclear import of the matrix protein early during infection. Interacts with host AP3M1; this interaction plays an essential role in trafficking the matrix protein in host cells. Interacts with host CAV1; this interaction probably facilitates viral budding. Interacts with host CFL1; this interaction probably facilitates viral replication. Interacts with host ZNF502; this interaction probably facilitates viral release. Interacts with host RACK1. Post-translationally, phosphorylation is important for oligomerization.

The protein resides in the virion. The protein localises to the host cytoplasm. It localises to the host nucleus. It is found in the host cell membrane. In terms of biological role, plays a crucial role in virus assembly into filaments and budding. Early in infection, localizes in the nucleus where it inhibits host cell transcription through direct binding to host chromatin. Later in infection, traffics to the cytoplasm through the action of host CRM1 to associate with inclusion bodies, the site of viral transcription and replication. During virus assembly and budding, acts as a bridge between the nucleocapsid and the lipid bilayer. Also plays a role in the inhibition of host interferon-beta response in a RACK1-dependent manner. The sequence is that of Matrix protein (M) from Homo sapiens (Human).